A 130-amino-acid polypeptide reads, in one-letter code: Small ribosomal subunit protein uS8 (130 aa).

It belongs to the universal ribosomal protein uS8 family. In terms of assembly, part of the 30S ribosomal subunit.

One of the primary rRNA binding proteins, it binds directly to 16S rRNA central domain where it helps coordinate assembly of the platform of the 30S subunit. This chain is Small ribosomal subunit protein uS8, found in Cenarchaeum symbiosum (strain A).